Consider the following 239-residue polypeptide: Lactate utilization protein A 1 (239 aa).

The protein belongs to the LutA/YkgE family.

In terms of biological role, is involved in L-lactate degradation and allows cells to grow with lactate as the sole carbon source. This Bacillus anthracis (strain A0248) protein is Lactate utilization protein A 1.